The following is an 84-amino-acid chain: Small ribosomal subunit protein bS20 (84 aa).

Over residues lysine 62–alanine 72 the composition is skewed to basic residues. Residues lysine 62–arginine 84 are disordered. The span at tryptophan 75–arginine 84 shows a compositional bias: polar residues.

It belongs to the bacterial ribosomal protein bS20 family.

Its function is as follows. Binds directly to 16S ribosomal RNA. The chain is Small ribosomal subunit protein bS20 from Mycoplasmoides gallisepticum (strain R(low / passage 15 / clone 2)) (Mycoplasma gallisepticum).